The sequence spans 574 residues: Interleukin-1 receptor-like 2 (574 aa).

The N-terminal stretch at 1–21 is a signal peptide; it reads MGVTSLLFCGVFFLLLLFVAA. At 22–338 the chain is on the extracellular side; sequence DTCEDIFMHN…ILIYPVPDFR (317 aa). Ig-like C2-type domains are found at residues 25–113, 132–215, and 225–321; these read EDIF…VNLT, PDVY…IRNY, and YGRR…TCHA. N43, N55, and N111 each carry an N-linked (GlcNAc...) asparagine glycan. A disulfide bridge connects residues C44 and C97. A disulfide bridge links C149 with C199. N-linked (GlcNAc...) asparagine glycans are attached at residues N231, N237, N253, N269, N290, and N302. C252 and C319 are joined by a disulfide. Residues 339 to 359 form a helical membrane-spanning segment; the sequence is AYLLGGLMAFLLLVVSVLFIY. Over 360 to 574 the chain is Cytoplasmic; the sequence is NSFKIDIMLW…CNAATGLITP (215 aa). In terms of domain architecture, TIR spans 384–539; sequence KLYDAYVLYP…KFWKKVRYHM (156 aa). Residue E470 is part of the active site.

This sequence belongs to the interleukin-1 receptor family. In terms of assembly, interacts with IL1RAP; the association is enhanced by IL36B indicative for an functional signaling complex and inhibited by IL36RN. Expressed in bone marrow-derived dendritic cells, splenic CD4(+) T-cells, bone marrow-derived macrophages and bone marrow-derived neutrophils.

Its subcellular location is the membrane. It catalyses the reaction NAD(+) + H2O = ADP-D-ribose + nicotinamide + H(+). Receptor for interleukin-36 (IL36A, IL36B and IL36G). After binding to interleukin-36 associates with the coreceptor IL1RAP to form the interleukin-36 receptor complex which mediates interleukin-36-dependent activation of NF-kappa-B, MAPK and other pathways. The IL-36 signaling system is thought to be present in epithelial barriers and to take part in local inflammatory response; it is similar to the IL-1 system. Seems to be involved in skin inflammatory response by induction of the IL-23/IL-17/IL-22 pathway. The protein is Interleukin-1 receptor-like 2 (Il1rl2) of Mus musculus (Mouse).